The chain runs to 871 residues: Tegument protein UL47 homolog (871 aa).

The disordered stretch occupies residues Met-1–Asp-212. The short motif at Ile-13 to Thr-33 is the Nuclear localization signal element. Polar residues-rich tracts occupy residues Thr-30 to Arg-41 and Glu-59 to Phe-81. 3 stretches are compositionally biased toward acidic residues: residues Ser-114–Gln-134, Ser-146–Asp-155, and Ser-185–Met-207.

The protein belongs to the alphaherpesvirinae HHV-1 UL47 family. In terms of assembly, interacts with US3 kinase. Interacts with UL31 and UL34; these interactions seem important for efficient virion nuclear egress. Interacts with UL41/VHS. Post-translationally, phosphorylated by US3. This phosphorylation is required for proper nuclear localization.

It is found in the virion tegument. Its subcellular location is the host nucleus. The protein resides in the host cytoplasm. Functionally, tegument protein that can bind to various RNA transcripts. Plays a role in the attenuation of selective viral and cellular mRNA degradation by modulating the activity of host shutoff RNase UL41/VHS. Also plays a role in the primary envelopment of virions in the perinuclear space, probably by interacting with two nuclear egress proteins UL31 and UL34. The protein is Tegument protein UL47 homolog of Equine herpesvirus 1 (strain V592) (EHV-1).